The sequence spans 323 residues: Melanocortin receptor 3 (323 aa).

Residues 1–37 lie on the Extracellular side of the membrane; that stretch reads MNSSCCPSSSYPTLPNLSQHPAAPSASNRSGSGFCEQ. 3 N-linked (GlcNAc...) asparagine glycosylation sites follow: N2, N16, and N28. The helical transmembrane segment at 38-63 threads the bilayer; that stretch reads VFIKPEVFLALGIVSLMENILVILAV. The Cytoplasmic segment spans residues 64 to 75; that stretch reads VRNGNLHSPMYF. The chain crosses the membrane as a helical span at residues 76 to 100; sequence FLCSLAAADMLVSLSNSLETIMIVV. Residues 101–118 are Extracellular-facing; it reads INSDSLTLEDQFIQHMDN. Residues 119–140 traverse the membrane as a helical segment; the sequence is IFDSMICISLVASICNLLAIAV. The Cytoplasmic segment spans residues 141 to 160; that stretch reads DRYVTIFYALRYHSIMTVRK. Residues 161–181 traverse the membrane as a helical segment; the sequence is ALSLIVAIWVCCGICGVMFIV. Topologically, residues 182-186 are extracellular; that stretch reads YSESK. Residues 187 to 210 form a helical membrane-spanning segment; sequence MVIVCLITMFFAMVLLMGTLYIHM. Topologically, residues 211–245 are cytoplasmic; sequence FLFARLHVQRIAALPPADGVAPQQHSCMKGAVTIT. The chain crosses the membrane as a helical span at residues 246–268; it reads ILLGVFIFCWAPFFLHLVLIITC. The Extracellular segment spans residues 269–277; sequence PTNPYCICY. Residues 278-301 traverse the membrane as a helical segment; sequence TAHFNTYLVLIMCNSVIDPLIYAF. Residues 302–323 lie on the Cytoplasmic side of the membrane; that stretch reads RSLELRNTFKEILCGCNGMNVG. C315 carries S-palmitoyl cysteine lipidation.

It belongs to the G-protein coupled receptor 1 family. In terms of tissue distribution, brain.

Its subcellular location is the cell membrane. Functionally, receptor for MSH (alpha, beta and gamma) and ACTH. This receptor is mediated by G proteins which activate adenylate cyclase. Required for expression of anticipatory patterns of activity and wakefulness during periods of limited nutrient availability and for the normal regulation of circadian clock activity in the brain. This chain is Melanocortin receptor 3 (Mc3r), found in Rattus norvegicus (Rat).